The following is a 496-amino-acid chain: MSEEMNDQMQVRRQKLQELIDLGIDPFGKRFERSATASELKSQWDEFSKEELHDKEDESHVSIAGRLMTKRGKGKAGFAHVQDLTGQIQIYVRKDQIGEEDFDNLWKGADLGDIVGIEGVMFKTNTGELSVKAKTFTLLSKALRPLPDKFHGLQDIEQRYRQRYLDLITNQDSTQTFINRSKIIQEMRNYLNKQGFLEVETPMMHQIAGGAAARPFVTHHNALDATLYMRIAIELHLKRLIVGGLEKVYEIGRVFRNEGVSTRHNPEFTMIELYEAYADYHDIMDLTESMVRHIAQEVFGSAKVQYNEEEIDLESAWTRLHIVDAVKEATGVDFYQIKSDEEAIAAAKEHGIEITNNMKYGHILNEFFEQKVEETLIQPTFIYGHPIEISPLAKKNPEDPRFTDRFELFIVGREHANAFTELNDPIDQRERFEAQLVEKAQGNDEAHEMDEDYIEALEYGMPPTGGLGIGIDRLVMLLTDSPSIRDVLLFPYMRQK.

Mg(2+) contacts are provided by Glu-407 and Glu-414.

It belongs to the class-II aminoacyl-tRNA synthetase family. Homodimer. It depends on Mg(2+) as a cofactor.

The protein localises to the cytoplasm. It catalyses the reaction tRNA(Lys) + L-lysine + ATP = L-lysyl-tRNA(Lys) + AMP + diphosphate. This Staphylococcus haemolyticus (strain JCSC1435) protein is Lysine--tRNA ligase.